A 209-amino-acid chain; its full sequence is Ribosomal RNA large subunit methyltransferase E (209 aa).

S-adenosyl-L-methionine is bound by residues Gly-63, Trp-65, Asp-83, Asp-99, and Asp-124. The active-site Proton acceptor is the Lys-164.

Belongs to the class I-like SAM-binding methyltransferase superfamily. RNA methyltransferase RlmE family.

The protein resides in the cytoplasm. It catalyses the reaction uridine(2552) in 23S rRNA + S-adenosyl-L-methionine = 2'-O-methyluridine(2552) in 23S rRNA + S-adenosyl-L-homocysteine + H(+). In terms of biological role, specifically methylates the uridine in position 2552 of 23S rRNA at the 2'-O position of the ribose in the fully assembled 50S ribosomal subunit. This is Ribosomal RNA large subunit methyltransferase E from Shewanella sp. (strain MR-7).